Here is a 30-residue protein sequence, read N- to C-terminus: GIPCGESCVWIPCISAALGCSCKNKVCYRN.

The cyclopeptide (Gly-Asn) cross-link spans 1-30 (GIPCGESCVWIPCISAALGCSCKNKVCYRN). Cystine bridges form between cysteine 4–cysteine 20, cysteine 8–cysteine 22, and cysteine 13–cysteine 27.

In terms of processing, this is a cyclic peptide. Expressed in fruit, pedicel, root and stem but not in leaf (at protein level).

Probably participates in a plant defense mechanism. The sequence is that of Circulin A from Chassalia chartacea (Chassalia curviflora).